Here is a 247-residue protein sequence, read N- to C-terminus: uncharacterized protein (247 aa).

An N-terminal signal peptide occupies residues 1 to 35 (MWGPGVTAEGLSVAPAPPPLLPLLLLLALALVAPS). Asparagine 57 is a glycosylation site (N-linked (GlcNAc...) asparagine). The helical transmembrane segment at 82 to 102 (LSGLLILLVLFAIGYFLQRII) threads the bilayer. Positions 109-179 (YPRGQARPGQ…GGRSDPSCAS (71 aa)) are disordered. Over residues 160–172 (SGGGGRGRGGGGR) the composition is skewed to gly residues.

Its subcellular location is the membrane. This is an uncharacterized protein from Homo sapiens (Human).